We begin with the raw amino-acid sequence, 466 residues long: ATP synthase subunit beta (466 aa).

Glycine 152 to threonine 159 lines the ATP pocket.

This sequence belongs to the ATPase alpha/beta chains family. In terms of assembly, F-type ATPases have 2 components, CF(1) - the catalytic core - and CF(0) - the membrane proton channel. CF(1) has five subunits: alpha(3), beta(3), gamma(1), delta(1), epsilon(1). CF(0) has three main subunits: a(1), b(2) and c(9-12). The alpha and beta chains form an alternating ring which encloses part of the gamma chain. CF(1) is attached to CF(0) by a central stalk formed by the gamma and epsilon chains, while a peripheral stalk is formed by the delta and b chains.

It is found in the cell inner membrane. It catalyses the reaction ATP + H2O + 4 H(+)(in) = ADP + phosphate + 5 H(+)(out). Produces ATP from ADP in the presence of a proton gradient across the membrane. The catalytic sites are hosted primarily by the beta subunits. This is ATP synthase subunit beta from Sulfurovum sp. (strain NBC37-1).